We begin with the raw amino-acid sequence, 145 residues long: Ribosomal RNA large subunit methyltransferase H (145 aa).

Residues leucine 64, glycine 93, and leucine 112–phenylalanine 117 each bind S-adenosyl-L-methionine.

This sequence belongs to the RNA methyltransferase RlmH family. As to quaternary structure, homodimer.

The protein resides in the cytoplasm. The catalysed reaction is pseudouridine(1915) in 23S rRNA + S-adenosyl-L-methionine = N(3)-methylpseudouridine(1915) in 23S rRNA + S-adenosyl-L-homocysteine + H(+). Its function is as follows. Specifically methylates the pseudouridine at position 1915 (m3Psi1915) in 23S rRNA. This Prochlorococcus marinus (strain NATL1A) protein is Ribosomal RNA large subunit methyltransferase H.